A 440-amino-acid polypeptide reads, in one-letter code: Putative postmeiotic segregation increased 2-like protein 1 (440 aa).

A compositionally biased stretch (basic and acidic residues) spans Arg164 to Arg178. The disordered stretch occupies residues Arg164–Ile215. In terms of domain architecture, Histidine kinase spans Pro230–Ser364.

Belongs to the DNA mismatch repair MutL/HexB family. As to expression, highly expressed in kidney, spleen, adrenal gland, ovary and cerebellum and to a lower extent in liver, esophagus, stomach, duodenum, colon, bladder, uterus, lung, pancreas and cerebrum. Not expressed in heart.

In Homo sapiens (Human), this protein is Putative postmeiotic segregation increased 2-like protein 1 (PMS2P1).